Reading from the N-terminus, the 103-residue chain is Small ribosomal subunit protein uS10 (103 aa).

This sequence belongs to the universal ribosomal protein uS10 family. In terms of assembly, part of the 30S ribosomal subunit.

Involved in the binding of tRNA to the ribosomes. The protein is Small ribosomal subunit protein uS10 of Azoarcus sp. (strain BH72).